The following is an 853-amino-acid chain: Envelope glycoprotein gp160 (853 aa).

A signal peptide spans 1-31 (MRVRGIERNCQNLWKWGIMLLGILMTCSNAD). Over 32 to 681 (NLWVTVYYGV…ITQWLWYIKI (650 aa)) the chain is Extracellular. An intrachain disulfide couples Cys53 to Cys73. N-linked (GlcNAc...) asparagine; by host glycans are attached at residues Asn87, Asn137, Asn144, Asn153, Asn157, Asn185, Asn188, Asn198, Asn235, Asn242, Asn263, Asn277, Asn290, and Asn296. 5 disulfides stabilise this stretch: Cys118–Cys206, Cys125–Cys197, Cys130–Cys154, Cys219–Cys248, and Cys229–Cys240. Positions 130-153 (CIDEVMENVTMKNNNVTEEIRMKN) are V1. A V2 region spans residues 154–197 (CSFNITTVVRDKTKQVHALFYRLDIVPIDNDNSTNSTNYRLINC). The tract at residues 297–329 (CTRPYRNIRQRTSIGLGQALYTTKTRSIIGQAY) is V3. Cys297 and Cys330 are disulfide-bonded. N-linked (GlcNAc...) asparagine; by host glycosylation is found at Asn331, Asn338, and Asn353. A CD4-binding loop region spans residues 362-372 (SSGGDPEITTH). 2 cysteine pairs are disulfide-bonded: Cys376–Cys442 and Cys383–Cys415. Positions 383–415 (CNTSGLFNSTWDISKSEWANSTESDDKPITLQC) are V4. N-linked (GlcNAc...) asparagine; by host glycans are attached at residues Asn384, Asn390, Asn402, Asn441, Asn445, Asn458, Asn459, and Asn462. V5 regions lie at residues 457-468 (TNNSSNETFRPG) and 460-468 (SSNETFRPG). The fusion peptide stretch occupies residues 509–529 (AIGLGAMFLGFLGAAGSTMGA). Residues 571–589 (KQLQARILAVERYLKDQQL) are immunosuppression. Cys595 and Cys601 form a disulfide bridge. N-linked (GlcNAc...) asparagine; by host glycosylation is found at Asn608, Asn613, Asn622, Asn634, and Asn671. Positions 630 to 664 (REIDNYTGLIYRLIEESQTQQEKNEQELLELDKWA) form a coiled coil. An MPER; binding to GalCer region spans residues 659-680 (ELDKWASLWNWFNITQWLWYIK). Residues 682–702 (FIMIVGGLIGLRIVFAVLSLV) form a helical membrane-spanning segment. Residues 703–853 (NRVRQGYSPL…IRQGLERLLL (151 aa)) lie on the Cytoplasmic side of the membrane. Residues 709–712 (YSPL) carry the YXXL motif; contains endocytosis signal motif. 2 S-palmitoyl cysteine; by host lipidation sites follow: Cys761 and Cys834. Residues 852–853 (LL) carry the Di-leucine internalization motif motif.

This sequence belongs to the HIV-1 env protein family. The mature envelope protein (Env) consists of a homotrimer of non-covalently associated gp120-gp41 heterodimers. The resulting complex protrudes from the virus surface as a spike. There seems to be as few as 10 spikes on the average virion. Interacts with host CD4, CCR5 and CXCR4. Gp120 also interacts with the C-type lectins CD209/DC-SIGN and CLEC4M/DC-SIGNR (collectively referred to as DC-SIGN(R)). Gp120 and gp41 interact with GalCer. Gp120 interacts with host ITGA4/ITGB7 complex; on CD4+ T-cells, this interaction results in rapid activation of integrin ITGAL/LFA-1, which facilitates efficient cell-to-cell spreading of HIV-1. Gp120 interacts with cell-associated heparan sulfate; this interaction increases virus infectivity on permissive cells and may be involved in infection of CD4- cells. As to quaternary structure, the mature envelope protein (Env) consists of a homotrimer of non-covalently associated gp120-gp41 heterodimers. The resulting complex protrudes from the virus surface as a spike. There seems to be as few as 10 spikes on the average virion. Post-translationally, highly glycosylated by host. The high number of glycan on the protein is reffered to as 'glycan shield' because it contributes to hide protein sequence from adaptive immune system. In terms of processing, palmitoylation of the transmembrane protein and of Env polyprotein (prior to its proteolytic cleavage) is essential for their association with host cell membrane lipid rafts. Palmitoylation is therefore required for envelope trafficking to classical lipid rafts, but not for viral replication. Specific enzymatic cleavages in vivo yield mature proteins. Envelope glycoproteins are synthesized as an inactive precursor that is heavily N-glycosylated and processed likely by host cell furin in the Golgi to yield the mature SU and TM proteins. The cleavage site between SU and TM requires the minimal sequence [KR]-X-[KR]-R. About 2 of the 9 disulfide bonds of gp41 are reduced by P4HB/PDI, following binding to CD4 receptor.

The protein resides in the virion membrane. Its subcellular location is the host cell membrane. It is found in the host endosome membrane. Functionally, oligomerizes in the host endoplasmic reticulum into predominantly trimers. In a second time, gp160 transits in the host Golgi, where glycosylation is completed. The precursor is then proteolytically cleaved in the trans-Golgi and thereby activated by cellular furin or furin-like proteases to produce gp120 and gp41. Attaches the virus to the host lymphoid cell by binding to the primary receptor CD4. This interaction induces a structural rearrangement creating a high affinity binding site for a chemokine coreceptor like CXCR4 and/or CCR5. Acts as a ligand for CD209/DC-SIGN and CLEC4M/DC-SIGNR, which are respectively found on dendritic cells (DCs), and on endothelial cells of liver sinusoids and lymph node sinuses. These interactions allow capture of viral particles at mucosal surfaces by these cells and subsequent transmission to permissive cells. HIV subverts the migration properties of dendritic cells to gain access to CD4+ T-cells in lymph nodes. Virus transmission to permissive T-cells occurs either in trans (without DCs infection, through viral capture and transmission), or in cis (following DCs productive infection, through the usual CD4-gp120 interaction), thereby inducing a robust infection. In trans infection, bound virions remain infectious over days and it is proposed that they are not degraded, but protected in non-lysosomal acidic organelles within the DCs close to the cell membrane thus contributing to the viral infectious potential during DCs' migration from the periphery to the lymphoid tissues. On arrival at lymphoid tissues, intact virions recycle back to DCs' cell surface allowing virus transmission to CD4+ T-cells. Its function is as follows. Acts as a class I viral fusion protein. Under the current model, the protein has at least 3 conformational states: pre-fusion native state, pre-hairpin intermediate state, and post-fusion hairpin state. During fusion of viral and target intracellular membranes, the coiled coil regions (heptad repeats) assume a trimer-of-hairpins structure, positioning the fusion peptide in close proximity to the C-terminal region of the ectodomain. The formation of this structure appears to drive apposition and subsequent fusion of viral and target cell membranes. Complete fusion occurs in host cell endosomes and is dynamin-dependent, however some lipid transfer might occur at the plasma membrane. The virus undergoes clathrin-dependent internalization long before endosomal fusion, thus minimizing the surface exposure of conserved viral epitopes during fusion and reducing the efficacy of inhibitors targeting these epitopes. Membranes fusion leads to delivery of the nucleocapsid into the cytoplasm. In Homo sapiens (Human), this protein is Envelope glycoprotein gp160.